Consider the following 632-residue polypeptide: Threonine--tRNA ligase (632 aa).

Residues 1–61 enclose the TGS domain; sequence MPIVTLPDGS…EHDAEVSILT (61 aa). A catalytic region spans residues 242-533; sequence DHRKLARKLD…LIEHYAGSMP (292 aa). Zn(2+)-binding residues include cysteine 333, histidine 384, and histidine 510.

It belongs to the class-II aminoacyl-tRNA synthetase family. As to quaternary structure, homodimer. Zn(2+) serves as cofactor.

The protein localises to the cytoplasm. The enzyme catalyses tRNA(Thr) + L-threonine + ATP = L-threonyl-tRNA(Thr) + AMP + diphosphate + H(+). Functionally, catalyzes the attachment of threonine to tRNA(Thr) in a two-step reaction: L-threonine is first activated by ATP to form Thr-AMP and then transferred to the acceptor end of tRNA(Thr). Also edits incorrectly charged L-seryl-tRNA(Thr). This chain is Threonine--tRNA ligase, found in Chromohalobacter salexigens (strain ATCC BAA-138 / DSM 3043 / CIP 106854 / NCIMB 13768 / 1H11).